The following is an 802-amino-acid chain: Valine--tRNA ligase (802 aa).

The 'HIGH' region motif lies at P45–H55. The short motif at K524–S528 is the 'KMSKS' region element. Residue K527 participates in ATP binding.

It belongs to the class-I aminoacyl-tRNA synthetase family. ValS type 2 subfamily. Monomer.

The protein resides in the cytoplasm. It catalyses the reaction tRNA(Val) + L-valine + ATP = L-valyl-tRNA(Val) + AMP + diphosphate. Functionally, catalyzes the attachment of valine to tRNA(Val). As ValRS can inadvertently accommodate and process structurally similar amino acids such as threonine, to avoid such errors, it has a 'posttransfer' editing activity that hydrolyzes mischarged Thr-tRNA(Val) in a tRNA-dependent manner. The chain is Valine--tRNA ligase from Ehrlichia canis (strain Jake).